The sequence spans 522 residues: Glucans biosynthesis protein G (522 aa).

Residues 1–33 (MLDNKFGFKQRVASLRWLSAAIMLSVSAVPAWA) form the signal peptide.

This sequence belongs to the OpgD/OpgG family.

Its subcellular location is the periplasm. The protein operates within glycan metabolism; osmoregulated periplasmic glucan (OPG) biosynthesis. In terms of biological role, involved in the biosynthesis of osmoregulated periplasmic glucans (OPGs). In Pectobacterium carotovorum subsp. carotovorum (strain PC1), this protein is Glucans biosynthesis protein G.